The chain runs to 143 residues: Nucleoside diphosphate kinase (143 aa).

Residues K11, F59, R87, T93, R104, and N114 each contribute to the ATP site. H117 functions as the Pros-phosphohistidine intermediate in the catalytic mechanism.

This sequence belongs to the NDK family. In terms of assembly, homotetramer. Mg(2+) serves as cofactor.

The protein resides in the cytoplasm. The enzyme catalyses a 2'-deoxyribonucleoside 5'-diphosphate + ATP = a 2'-deoxyribonucleoside 5'-triphosphate + ADP. It catalyses the reaction a ribonucleoside 5'-diphosphate + ATP = a ribonucleoside 5'-triphosphate + ADP. Its function is as follows. Major role in the synthesis of nucleoside triphosphates other than ATP. The ATP gamma phosphate is transferred to the NDP beta phosphate via a ping-pong mechanism, using a phosphorylated active-site intermediate. This Nitrosococcus oceani (strain ATCC 19707 / BCRC 17464 / JCM 30415 / NCIMB 11848 / C-107) protein is Nucleoside diphosphate kinase.